A 276-amino-acid chain; its full sequence is Large ribosomal subunit protein uL2 (276 aa).

A disordered region spans residues 223-276 (AVMNPVDHPHGGGEGKNSVGRKSPLTPWGKPALGIKTRGRKTSDKFIVRRRNEK). Residues 263 to 276 (KTSDKFIVRRRNEK) show a composition bias toward basic and acidic residues.

This sequence belongs to the universal ribosomal protein uL2 family. As to quaternary structure, part of the 50S ribosomal subunit. Forms a bridge to the 30S subunit in the 70S ribosome.

Its function is as follows. One of the primary rRNA binding proteins. Required for association of the 30S and 50S subunits to form the 70S ribosome, for tRNA binding and peptide bond formation. It has been suggested to have peptidyltransferase activity; this is somewhat controversial. Makes several contacts with the 16S rRNA in the 70S ribosome. This Fusobacterium nucleatum subsp. nucleatum (strain ATCC 25586 / DSM 15643 / BCRC 10681 / CIP 101130 / JCM 8532 / KCTC 2640 / LMG 13131 / VPI 4355) protein is Large ribosomal subunit protein uL2.